The primary structure comprises 287 residues: Fructose-1,6-bisphosphatase class 1 (287 aa).

Mg(2+)-binding residues include E67, D86, L88, and D89. Residues 89–92, Y195, and K226 contribute to the substrate site; that span reads DGSS. E232 contributes to the Mg(2+) binding site.

It belongs to the FBPase class 1 family. Homotetramer. Mg(2+) is required as a cofactor.

It is found in the cytoplasm. It catalyses the reaction beta-D-fructose 1,6-bisphosphate + H2O = beta-D-fructose 6-phosphate + phosphate. The protein operates within carbohydrate biosynthesis; gluconeogenesis. The sequence is that of Fructose-1,6-bisphosphatase class 1 from Campylobacter concisus (strain 13826).